The sequence spans 159 residues: Ribosome maturation factor RimP (159 aa).

The protein belongs to the RimP family.

It localises to the cytoplasm. Its function is as follows. Required for maturation of 30S ribosomal subunits. This chain is Ribosome maturation factor RimP, found in Lacticaseibacillus casei (strain BL23) (Lactobacillus casei).